Reading from the N-terminus, the 543-residue chain is Excitatory amino acid transporter 1 (543 aa).

The Cytoplasmic segment spans residues 1-47; sequence MTKSNGEDPRAGSRMERFQQGVRQRTLLAKKKVQNITKDDVKGFLKR. Residues 48–68 traverse the membrane as a helical segment; that stretch reads NGFVLFTVIAVVVGSILGFSV. At 69–86 the chain is on the extracellular side; that stretch reads RSYHMTFRELKYFSFPGE. A helical membrane pass occupies residues 87–108; sequence LLMRMLQMLVLPLIVSSLVTGM. Topologically, residues 109 to 122 are cytoplasmic; sequence AALDSKASGKMGLR. The helical transmembrane segment at 123-145 threads the bilayer; it reads AVVYYMTTTVIAVFIGIVIVIIV. The Extracellular portion of the chain corresponds to 146–237; sequence HPGKGTKEHM…MREEMIPVPG (92 aa). N-linked (GlcNAc...) asparagine glycans are attached at residues Asn-206 and Asn-217. The chain crosses the membrane as a helical span at residues 238-261; sequence AVNGVNALGLVVFSMCFGLVIGNM. Residues 262-270 are Cytoplasmic-facing; sequence KEQGKALKD. The helical transmembrane segment at 271–298 threads the bilayer; the sequence is FFDSLNEAIMRLVAVIMWYAPIGILFLI. The Extracellular portion of the chain corresponds to 299-319; sequence AGKIAEMEDMGVVGGQLGMYT. A helical transmembrane segment spans residues 320 to 341; sequence VTVIIGLLIHAVIVLPLLYFAV. Residues 342–346 lie on the Cytoplasmic side of the membrane; it reads TRKNP. An intramembrane region (discontinuously helical) is located at residues 347 to 377; the sequence is WVFIGGILQALITALGTSSSSATLPITFKCL. 364–366 provides a ligand contact to L-aspartate; the sequence is SSS. The Cytoplasmic segment spans residues 378-386; the sequence is EENNKVDKR. The chain crosses the membrane as a helical span at residues 387–413; the sequence is VTRFVLPVGATINMDGTALYEALAAIF. 3 residues coordinate Na(+): Gly-395, Thr-397, and Asn-399. Thr-403 is a binding site for L-aspartate. Residues 414–426 lie on the Extracellular side of the membrane; it reads IAQVNNYDLNFGQ. Positions 427–460 form an intramembrane region, discontinuously helical; that stretch reads ILTISITATAASIGAAGIPQAGLVTMVIVLTSVG. 444–448 lines the L-aspartate pocket; that stretch reads IPQAG. Topologically, residues 461–473 are extracellular; the sequence is LPTDDITLIIAVD. The chain crosses the membrane as a helical span at residues 474–495; the sequence is WFLDRLRTTTNVLGDSLGAGIV. 2 residues coordinate L-aspartate: Asp-477 and Asn-484. Residues Asn-484 and Asp-488 each coordinate Na(+). The Cytoplasmic segment spans residues 496–543; the sequence is EHLSRHELQSGDAEMGNSVIEENEMKKPYQLVSQENELEKPIDSETKM. A disordered region spans residues 521-543; it reads KKPYQLVSQENELEKPIDSETKM. The segment covering 532-543 has biased composition (basic and acidic residues); the sequence is ELEKPIDSETKM.

This sequence belongs to the dicarboxylate/amino acid:cation symporter (DAACS) (TC 2.A.23) family. Homotrimer. As to expression, detected in retina (at protein level).

Its subcellular location is the cell membrane. The enzyme catalyses K(+)(in) + L-glutamate(out) + 3 Na(+)(out) + H(+)(out) = K(+)(out) + L-glutamate(in) + 3 Na(+)(in) + H(+)(in). The catalysed reaction is K(+)(in) + L-aspartate(out) + 3 Na(+)(out) + H(+)(out) = K(+)(out) + L-aspartate(in) + 3 Na(+)(in) + H(+)(in). It catalyses the reaction D-aspartate(out) + K(+)(in) + 3 Na(+)(out) + H(+)(out) = D-aspartate(in) + K(+)(out) + 3 Na(+)(in) + H(+)(in). Functionally, sodium-dependent, high-affinity amino acid transporter that mediates the uptake of L-glutamate and also L-aspartate and D-aspartate. Functions as a symporter that transports one amino acid molecule together with two or three Na(+) ions and one proton, in parallel with the counter-transport of one K(+) ion. Plays a redundant role in the rapid removal of released glutamate from the synaptic cleft, which is essential for terminating the postsynaptic action of glutamate. This Ambystoma tigrinum (Eastern tiger salamander) protein is Excitatory amino acid transporter 1 (SLC1A3).